A 1400-amino-acid chain; its full sequence is DNA-directed RNA polymerase subunit beta' (1400 aa).

Zn(2+) is bound by residues Cys-70, Cys-72, Cys-85, and Cys-88. Asp-460, Asp-462, and Asp-464 together coordinate Mg(2+). Residues Cys-814, Cys-888, Cys-895, and Cys-898 each contribute to the Zn(2+) site. The disordered stretch occupies residues 1368–1400 (RQAKRAEAQEGPSAEQATDNLAALLNAGFSSDE).

It belongs to the RNA polymerase beta' chain family. The RNAP catalytic core consists of 2 alpha, 1 beta, 1 beta' and 1 omega subunit. When a sigma factor is associated with the core the holoenzyme is formed, which can initiate transcription. The cofactor is Mg(2+). Zn(2+) serves as cofactor.

The enzyme catalyses RNA(n) + a ribonucleoside 5'-triphosphate = RNA(n+1) + diphosphate. Functionally, DNA-dependent RNA polymerase catalyzes the transcription of DNA into RNA using the four ribonucleoside triphosphates as substrates. The chain is DNA-directed RNA polymerase subunit beta' from Vibrio parahaemolyticus serotype O3:K6 (strain RIMD 2210633).